Here is a 236-residue protein sequence, read N- to C-terminus: Glucosamine-6-phosphate deaminase (236 aa).

The Proton acceptor; for enolization step role is filled by D62. Residue N128 is the For ring-opening step of the active site. The Proton acceptor; for ring-opening step role is filled by H130. E135 serves as the catalytic For ring-opening step.

This sequence belongs to the glucosamine/galactosamine-6-phosphate isomerase family. NagB subfamily.

The enzyme catalyses alpha-D-glucosamine 6-phosphate + H2O = beta-D-fructose 6-phosphate + NH4(+). The protein operates within amino-sugar metabolism; N-acetylneuraminate degradation; D-fructose 6-phosphate from N-acetylneuraminate: step 5/5. Catalyzes the reversible isomerization-deamination of glucosamine 6-phosphate (GlcN6P) to form fructose 6-phosphate (Fru6P) and ammonium ion. This chain is Glucosamine-6-phosphate deaminase, found in Pediococcus pentosaceus (strain ATCC 25745 / CCUG 21536 / LMG 10740 / 183-1w).